The primary structure comprises 419 residues: Creatine kinase S-type, mitochondrial (419 aa).

A mitochondrion-targeting transit peptide spans 1-39 (MASAFSKLLTGRNASLLFTTLGTSALTTGYLLNRQKVSA). Residues 40–64 (DAREQHKLFPPSADYPDLRKHNNCM) are cardiolipin-binding. The 87-residue stretch at 46–132 (KLFPPSADYP…FDPVIKLRHN (87 aa)) folds into the Phosphagen kinase N-terminal domain. Residues 159 to 401 (YVLSSRVRTG…NYLVDCEKKL (243 aa)) form the Phosphagen kinase C-terminal domain. ATP contacts are provided by residues 162 to 166 (SSRVR) and histidine 225. A Phosphotyrosine modification is found at tyrosine 255. Residues arginine 270, arginine 326, 354–359 (RGTGGV), and aspartate 369 contribute to the ATP site. Threonine 356 is modified (phosphothreonine).

The protein belongs to the ATP:guanido phosphotransferase family. As to quaternary structure, exists as an octamer composed of four CKMT2 homodimers. As to expression, sarcomere-specific. Found only in heart and skeletal muscles.

The protein localises to the mitochondrion inner membrane. It catalyses the reaction creatine + ATP = N-phosphocreatine + ADP + H(+). Reversibly catalyzes the transfer of phosphate between ATP and various phosphogens (e.g. creatine phosphate). Creatine kinase isoenzymes play a central role in energy transduction in tissues with large, fluctuating energy demands, such as skeletal muscle, heart, brain and spermatozoa. The protein is Creatine kinase S-type, mitochondrial (Ckmt2) of Rattus norvegicus (Rat).